Reading from the N-terminus, the 125-residue chain is Small ribosomal subunit protein uS12 (125 aa).

Residues 9-28 (RSERSKLKKKTKSPALKQCP) form a disordered region. The residue at position 89 (D89) is a 3-methylthioaspartic acid. The tract at residues 104 to 125 (AQGVKDRKQGRSKYGTKRPKKA) is disordered. A compositionally biased stretch (basic residues) spans 113 to 125 (GRSKYGTKRPKKA).

Belongs to the universal ribosomal protein uS12 family. Part of the 30S ribosomal subunit. Contacts proteins S8 and S17. May interact with IF1 in the 30S initiation complex.

With S4 and S5 plays an important role in translational accuracy. In terms of biological role, interacts with and stabilizes bases of the 16S rRNA that are involved in tRNA selection in the A site and with the mRNA backbone. Located at the interface of the 30S and 50S subunits, it traverses the body of the 30S subunit contacting proteins on the other side and probably holding the rRNA structure together. The combined cluster of proteins S8, S12 and S17 appears to hold together the shoulder and platform of the 30S subunit. The polypeptide is Small ribosomal subunit protein uS12 (Rippkaea orientalis (strain PCC 8801 / RF-1) (Cyanothece sp. (strain PCC 8801))).